The primary structure comprises 1227 residues: Pentatricopeptide repeat-containing protein At5g15280, mitochondrial (1227 aa).

Residues 1-31 (MLNLLSISSSSRLRFLNKVSSLTYHYSFAFF) constitute a mitochondrion transit peptide. PPR repeat units follow at residues 146–180 (LPQA…GDTM), 182–216 (NEGI…GLVP), 217–251 (LTSC…RAEL), 255–289 (NIDS…GCIL), 290–320 (NSSI…VKYE), 322–356 (DVFV…GFKQ), 357–391 (DEVT…GYKP), 392–426 (DVYS…GMML), 427–461 (SLST…GLIE), 527–561 (VLPE…GQKL), 562–597 (SRRS…AYQL), 598–632 (DGET…HHPI), 633–667 (DNVT…NWLP), 668–698 (DLND…VFIS), 703–737 (QSEA…GCIV), 738–772 (EQEV…KHIP), 773–800 (SLGS…AEQI), 802–836 (SSYV…GLSS), 837–871 (YNKI…NIIC), 872–906 (SVKS…ESNP), 908–942 (GVII…GVLP), 943–977 (DETT…GMKP), 978–1012 (NNRS…GWNL), 1014–1044 (SSVV…VTRN), 1047–1081 (MAPN…QSIP), 1082–1116 (GSSS…GLSP), 1117–1151 (SIST…GESP), and 1152–1186 (SQEM…GYEV).

This sequence belongs to the PPR family. P subfamily.

The protein localises to the mitochondrion. The sequence is that of Pentatricopeptide repeat-containing protein At5g15280, mitochondrial from Arabidopsis thaliana (Mouse-ear cress).